A 352-amino-acid polypeptide reads, in one-letter code: Protein-glutamate methylesterase/protein-glutamine glutaminase 2 (352 aa).

The Response regulatory domain maps to 6–124; it reads KVLIVEDSLV…NAGYDTMAAK (119 aa). At D57 the chain carries 4-aspartylphosphate. The region spanning 162–343 is the CheB-type methylesterase domain; it reads PGTYSMVGIV…LPLPAIAARL (182 aa). Catalysis depends on residues S173, H200, and D292.

This sequence belongs to the CheB family. In terms of processing, phosphorylated by CheA. Phosphorylation of the N-terminal regulatory domain activates the methylesterase activity.

Its subcellular location is the cytoplasm. The catalysed reaction is [protein]-L-glutamate 5-O-methyl ester + H2O = L-glutamyl-[protein] + methanol + H(+). It carries out the reaction L-glutaminyl-[protein] + H2O = L-glutamyl-[protein] + NH4(+). Functionally, involved in chemotaxis. Part of a chemotaxis signal transduction system that modulates chemotaxis in response to various stimuli. Catalyzes the demethylation of specific methylglutamate residues introduced into the chemoreceptors (methyl-accepting chemotaxis proteins or MCP) by CheR. Also mediates the irreversible deamidation of specific glutamine residues to glutamic acid. This chain is Protein-glutamate methylesterase/protein-glutamine glutaminase 2, found in Paramagnetospirillum magneticum (strain ATCC 700264 / AMB-1) (Magnetospirillum magneticum).